The primary structure comprises 827 residues: Copper-transporting ATPase 2 (827 aa).

2 consecutive HMA domains span residues 15-80 and 82-148; these read VSTN…YAPR and ATEE…YELR. Cu cation is bound by residues Cys26, Cys29, Cys93, and Cys96. A run of 6 helical transmembrane segments spans residues 174–194, 210–230, 246–266, 271–291, 430–450, and 458–478; these read VTISVLMTLPLFLMEMGSHFI, NLYLQFALATLVLFGPGLRFF, SLVVLGTTAAWGYSVVATFVP, SGTANVYYEAAAVIVTLVLLG, GWFVPAVILAAVLTFAAWYTF, and FALVNAVAVLIIACPCAMGLA. Asp515 serves as the catalytic 4-aspartylphosphate intermediate. Positions 714 and 718 each coordinate Mg(2+). 2 helical membrane-spanning segments follow: residues 771 to 793 and 797 to 819; these read NLFWAFAYNVSLIPVAAGVLYPV and LLSPIFAAAAMAMSSVFVLGNAL.

This sequence belongs to the cation transport ATPase (P-type) (TC 3.A.3) family. Type IB subfamily.

It localises to the cell membrane. The catalysed reaction is Cu(2+)(in) + ATP + H2O = Cu(2+)(out) + ADP + phosphate + H(+). Involved in copper transport. In Rhizobium meliloti (strain 1021) (Ensifer meliloti), this protein is Copper-transporting ATPase 2 (actP2).